The primary structure comprises 482 residues: ATP synthase subunit beta (482 aa).

An ATP-binding site is contributed by 161–168; sequence GGAGVGKT.

The protein belongs to the ATPase alpha/beta chains family. In terms of assembly, F-type ATPases have 2 components, CF(1) - the catalytic core - and CF(0) - the membrane proton channel. CF(1) has five subunits: alpha(3), beta(3), gamma(1), delta(1), epsilon(1). CF(0) has four main subunits: a(1), b(1), b'(1) and c(9-12).

The protein localises to the cellular thylakoid membrane. It catalyses the reaction ATP + H2O + 4 H(+)(in) = ADP + phosphate + 5 H(+)(out). Produces ATP from ADP in the presence of a proton gradient across the membrane. The catalytic sites are hosted primarily by the beta subunits. The polypeptide is ATP synthase subunit beta (Microcystis aeruginosa (strain NIES-843 / IAM M-2473)).